Reading from the N-terminus, the 367-residue chain is Peptidyl-prolyl cis-trans isomerase D (367 aa).

In terms of domain architecture, PPIase cyclophilin-type spans 7–171 (FFEVAIGGKT…QPVTIVDCGE (165 aa)). 3 TPR repeats span residues 213-246 (IEKL…LEDY), 264-297 (ISCY…ETVA), and 302-335 (AKAL…EPAD).

This sequence belongs to the cyclophilin-type PPIase family. PPIase D subfamily.

It is found in the cytoplasm. The enzyme catalyses [protein]-peptidylproline (omega=180) = [protein]-peptidylproline (omega=0). Its function is as follows. PPIases accelerate the folding of proteins. It catalyzes the cis-trans isomerization of proline imidic peptide bonds in oligopeptides. The sequence is that of Peptidyl-prolyl cis-trans isomerase D (CPR6) from Yarrowia lipolytica (strain CLIB 122 / E 150) (Yeast).